The following is a 580-amino-acid chain: Glutathione hydrolase proenzyme (580 aa).

The first 25 residues, 1–25 (MIKPTFLRRVAIAALLSGSCFSAAA), serve as a signal peptide directing secretion. Residue arginine 114 coordinates L-glutamate. Threonine 391 acts as the Nucleophile in catalysis. Residues threonine 409, asparagine 411, glutamine 430, aspartate 433, 462–463 (SS), and 483–484 (GG) each bind L-glutamate. A disordered region spans residues 561 to 580 (DGELYGASDPRSVDDLTAGY).

Belongs to the gamma-glutamyltransferase family. In terms of assembly, this enzyme consists of two polypeptide chains, which are synthesized in precursor form from a single polypeptide. Cleaved by autocatalysis into a large and a small subunit.

It is found in the periplasm. It catalyses the reaction an N-terminal (5-L-glutamyl)-[peptide] + an alpha-amino acid = 5-L-glutamyl amino acid + an N-terminal L-alpha-aminoacyl-[peptide]. The catalysed reaction is glutathione + H2O = L-cysteinylglycine + L-glutamate. It carries out the reaction an S-substituted glutathione + H2O = an S-substituted L-cysteinylglycine + L-glutamate. It participates in sulfur metabolism; glutathione metabolism. Its activity is regulated as follows. Transferase and hydrolase activities are inhibited by L-Ala and L-Gln, and also by GGT affinity labeling reagents such as azaserine and 6-diazo-5-oxo-nor-leucine. In terms of biological role, cleaves the gamma-glutamyl bond of periplasmic glutathione (gamma-Glu-Cys-Gly), glutathione conjugates, and other gamma-glutamyl compounds. The metabolism of glutathione releases free glutamate and the dipeptide cysteinyl-glycine, which is hydrolyzed to cysteine and glycine by dipeptidases; it may function in amino acid uptake/salvage, or possibly in peptidoglycan linkage. Catalyzes the hydrolysis and transpeptidation of many gamma-glutamyl compounds (including some D-gamma-glutamyl substrates), with a preference for basic and aromatic amino acids as acceptors. The KM values for gamma-glutamyl acceptors are so high that it has been proposed transpeptidation is not the physiological role in E.coli. In Escherichia coli (strain K12), this protein is Glutathione hydrolase proenzyme (ggt).